Reading from the N-terminus, the 390-residue chain is MQLSKNPIKQTRNREKNYTDDFTMKRSVIMAPESPVFFPPPLVFSPTSVKTPLSSPRSSPPKLTMVACPPRKPKETKTTGSDSETVLKRKRPPMLDLTAAPTVASWCSTTRETAEKGAEVVEAEEDGYYSVYCKRGRRGPMEDRYFAAVDRNDDGGYKNAFFGVFDGHGGSKAAEFAAMNLGNNIEAAMASARSGEDGCSMESAIREGYIKTDEDFLKEGSRGGACCVTALISKGELAVSNAGDCRAVMSRGGTAEALTSDHNPSQANELKRIEALGGYVDCCNGVWRIQGTLAVSRGIGDRYLKEWVIAEPETRTLRIKPEFEFLILASDGLWDKVTNQEAVDVVRPYCVGVENPMTLSACKKLAELSVKRGSLDDISLIIIQLQNFLP.

The span at 1–10 shows a compositional bias: polar residues; that stretch reads MQLSKNPIKQ. Disordered stretches follow at residues 1–20 and 40–85; these read MQLS…NYTD and PPLV…DSET. The span at 44–61 shows a compositional bias: low complexity; the sequence is FSPTSVKTPLSSPRSSPP. In terms of domain architecture, PPM-type phosphatase spans 128 to 385; that stretch reads YYSVYCKRGR…DDISLIIIQL (258 aa). Residues D166, G167, D331, and D376 each coordinate Mn(2+).

It belongs to the PP2C family. The cofactor is Mg(2+). Mn(2+) is required as a cofactor.

It catalyses the reaction O-phospho-L-seryl-[protein] + H2O = L-seryl-[protein] + phosphate. The enzyme catalyses O-phospho-L-threonyl-[protein] + H2O = L-threonyl-[protein] + phosphate. This chain is Probable protein phosphatase 2C 30 (PP2C5), found in Arabidopsis thaliana (Mouse-ear cress).